Here is a 479-residue protein sequence, read N- to C-terminus: MATAIPKITDQFHSAQDIGWYGSSYLLTNSCLTISFGKLYTLYPVKWIYLVALALFEIGSLVCGFTPNSVGLIIGRAITGLGSAGLFSGAITVISQSMPLQRRLLCISVIMCLFGVADVAGPLIGGVFTDYLTWRWCFYINLPFGGLTALAIVFLLEAQQPVKQAGGIKCLLSHLDLVGLLFLFPAVICLLLVLSWGGADYPWDDRRIIGLIVGFTALILVFIVVQWWKQDKATVPPRLIKKRDIWGTSIFSFCITGAMMAFTYHLPIWFQSVKGVSATKSGLMSIPTILGMTICSLLSAVLVGKIGFYTPFMYAAPVLSVIGAGLLSTLKVDSGPAQWIGYQIPFGIGLGIGLSQPMVVVQAVLEPDDIPLAIAITAFMESLGGSVAISVAQSVFRSQLVKNMALEAPQANAHGNITTAMTTLRDTVPPEMLSGVLRAYNLAITQALYVGVALSSLAIVGALPIRWTSVNEKKTEGCP.

A run of 11 helical transmembrane segments spans residues 47–67 (WIYL…GFTP), 71–91 (GLII…SGAI), 104–124 (LLCI…GPLI), 136–156 (WCFY…VFLL), 177–197 (LVGL…LSWG), 208–228 (IIGL…VQWW), 250–270 (IFSF…PIWF), 283–303 (LMSI…AVLV), 306–326 (IGFY…GAGL), 344–364 (IPFG…VQAV), and 372–392 (LAIA…ISVA). The N-linked (GlcNAc...) asparagine glycan is linked to asparagine 416. The chain crosses the membrane as a helical span at residues 442–462 (LAITQALYVGVALSSLAIVGA).

Belongs to the major facilitator superfamily. TCR/Tet family.

Its subcellular location is the cell membrane. MFS-type transporter; part of the lnb gene cluster that mediates the biosynthesis of diastereomeric piperazines. Lna and lnb clusters encode sets of enzymes that produce overlapping sets of previously undescribed metabolites such as piperazinomycin-like metabolites or morpholine. The lna and lnb biosynthetic pathways appear to be part of a signaling network that controls the formation of sclerotia, a resilient overwintering structure. May be involved in the secretion of the metabolites produced by the lna and lnb clusters. The chain is MFS-type transporter lnaF from Aspergillus flavus (strain ATCC 200026 / FGSC A1120 / IAM 13836 / NRRL 3357 / JCM 12722 / SRRC 167).